Reading from the N-terminus, the 299-residue chain is Tyrosine recombinase XerC (299 aa).

In terms of domain architecture, Core-binding (CB) spans 1-85 (MKRQLEAYCA…AVRGLYRYLN (85 aa)). The region spanning 106 to 285 (RLPKVLDTDR…DFQHLAAVYD (180 aa)) is the Tyr recombinase domain. Residues Arg146, Lys170, His237, Arg240, and His263 contribute to the active site. Tyr272 functions as the O-(3'-phospho-DNA)-tyrosine intermediate in the catalytic mechanism.

The protein belongs to the 'phage' integrase family. XerC subfamily. Forms a cyclic heterotetrameric complex composed of two molecules of XerC and two molecules of XerD.

It localises to the cytoplasm. Site-specific tyrosine recombinase, which acts by catalyzing the cutting and rejoining of the recombining DNA molecules. The XerC-XerD complex is essential to convert dimers of the bacterial chromosome into monomers to permit their segregation at cell division. It also contributes to the segregational stability of plasmids. The protein is Tyrosine recombinase XerC of Pseudomonas putida (strain ATCC 47054 / DSM 6125 / CFBP 8728 / NCIMB 11950 / KT2440).